Consider the following 490-residue polypeptide: NADP-reducing hydrogenase subunit HndC (490 aa).

4Fe-4S ferredoxin-type domains lie at 433-462 (LTYT…GTKK) and 463-490 (QPHT…IIKQ).

The protein belongs to the complex I 51 kDa subunit family. As to quaternary structure, heterotetramer composed of HndA, HndB, HndC and HndD subunits. HndC is probably the reducing subunit.

It carries out the reaction H2 + NADP(+) = NADPH + H(+). With respect to regulation, inhibited by oxygen. Catalyzes the reduction of NADP in the presence of molecular H2 to yield NADPH. The chain is NADP-reducing hydrogenase subunit HndC (hndC) from Solidesulfovibrio fructosivorans (Desulfovibrio fructosivorans).